We begin with the raw amino-acid sequence, 390 residues long: Deoxyhypusine synthase-like protein (390 aa).

It belongs to the deoxyhypusine synthase family.

This Nostoc punctiforme (strain ATCC 29133 / PCC 73102) protein is Deoxyhypusine synthase-like protein.